The primary structure comprises 132 residues: Small ribosomal subunit protein uS8 (132 aa).

This sequence belongs to the universal ribosomal protein uS8 family. As to quaternary structure, part of the 30S ribosomal subunit. Contacts proteins S5 and S12.

In terms of biological role, one of the primary rRNA binding proteins, it binds directly to 16S rRNA central domain where it helps coordinate assembly of the platform of the 30S subunit. This chain is Small ribosomal subunit protein uS8, found in Francisella tularensis subsp. novicida (strain U112).